A 270-amino-acid chain; its full sequence is Putative phosphoenolpyruvate synthase regulatory protein (270 aa).

154-161 (GVSRAGKT) provides a ligand contact to ADP.

The protein belongs to the pyruvate, phosphate/water dikinase regulatory protein family. PSRP subfamily.

The enzyme catalyses [pyruvate, water dikinase] + ADP = [pyruvate, water dikinase]-phosphate + AMP + H(+). The catalysed reaction is [pyruvate, water dikinase]-phosphate + phosphate + H(+) = [pyruvate, water dikinase] + diphosphate. Functionally, bifunctional serine/threonine kinase and phosphorylase involved in the regulation of the phosphoenolpyruvate synthase (PEPS) by catalyzing its phosphorylation/dephosphorylation. The polypeptide is Putative phosphoenolpyruvate synthase regulatory protein (Deinococcus geothermalis (strain DSM 11300 / CIP 105573 / AG-3a)).